A 291-amino-acid polypeptide reads, in one-letter code: MASLKEMRNRISSVKATQKITKAMQMVAAAKLRRSQDAAESARPYARRLASVIANLAAGVSGDGAPKLLAGTGRDDRHLVVVAAADRGLAGGFTSSIVRAARAHIDGLIAQGKDVRVVCVGKKVTAQLAKPYAGRIVETFDLSSYRQLTLSVAQPIADVITREYEAGETDVVTLFYSRFKSVVQQIPTGLQLIPAVVETGEAASGPTAVYEYEPSEEAILETLLPRNLTVQILSALLDNMAGFYASQMTAMDNATRNAGDMIKRYTLEYNRSRQAQITKELIEIISGAEAV.

Belongs to the ATPase gamma chain family. F-type ATPases have 2 components, CF(1) - the catalytic core - and CF(0) - the membrane proton channel. CF(1) has five subunits: alpha(3), beta(3), gamma(1), delta(1), epsilon(1). CF(0) has three main subunits: a, b and c.

The protein resides in the cell inner membrane. Functionally, produces ATP from ADP in the presence of a proton gradient across the membrane. The gamma chain is believed to be important in regulating ATPase activity and the flow of protons through the CF(0) complex. The protein is ATP synthase gamma chain of Caulobacter vibrioides (strain NA1000 / CB15N) (Caulobacter crescentus).